Consider the following 272-residue polypeptide: Putative phosphoenolpyruvate synthase regulatory protein (272 aa).

152-159 (GVSRCGKT) contributes to the ADP binding site.

Belongs to the pyruvate, phosphate/water dikinase regulatory protein family. PSRP subfamily.

The catalysed reaction is [pyruvate, water dikinase] + ADP = [pyruvate, water dikinase]-phosphate + AMP + H(+). It carries out the reaction [pyruvate, water dikinase]-phosphate + phosphate + H(+) = [pyruvate, water dikinase] + diphosphate. Bifunctional serine/threonine kinase and phosphorylase involved in the regulation of the phosphoenolpyruvate synthase (PEPS) by catalyzing its phosphorylation/dephosphorylation. The chain is Putative phosphoenolpyruvate synthase regulatory protein from Pseudomonas fluorescens (strain ATCC BAA-477 / NRRL B-23932 / Pf-5).